A 177-amino-acid chain; its full sequence is MSWQAAVEKTVTGFGYELVECERGSQGLLRVFIDRVPGQVYDGGPGEFVTVEDCEKVTRQLQYVLEVENCDYSRLEVSSPGLDRPLKKSADYARFAGERIDITLKLPFQGRKKYQGVLAASGEAWELHFNDGKQDQVLGFTLEEVRDARLVPVVDFKGRKGKEPAEPAAQVPGGYEQ.

Belongs to the RimP family.

It is found in the cytoplasm. Required for maturation of 30S ribosomal subunits. This is Ribosome maturation factor RimP from Methylibium petroleiphilum (strain ATCC BAA-1232 / LMG 22953 / PM1).